The sequence spans 375 residues: Probable sugar phosphate/phosphate translocator At3g17430 (375 aa).

10 consecutive transmembrane segments (helical) span residues leucine 9 to tyrosine 29, leucine 43 to isoleucine 63, phenylalanine 76 to phenylalanine 96, valine 106 to valine 126, methionine 140 to valine 160, valine 163 to leucine 183, isoleucine 193 to valine 213, tryptophan 229 to isoleucine 249, isoleucine 257 to phenylalanine 276, and threonine 280 to isoleucine 302. Positions glutamate 328–glycine 348 are disordered.

The protein belongs to the TPT transporter family. TPT (TC 2.A.7.9) subfamily.

It localises to the membrane. The chain is Probable sugar phosphate/phosphate translocator At3g17430 from Arabidopsis thaliana (Mouse-ear cress).